We begin with the raw amino-acid sequence, 580 residues long: Small conductance calcium-activated potassium channel protein 2 (580 aa).

Disordered stretches follow at residues 1 to 68 (MSSC…VSKP) and 88 to 116 (GGGG…KKNQ). A compositionally biased stretch (low complexity) spans 48–61 (SSPSAAAAASSSAP). A compositionally biased stretch (gly residues) spans 88–104 (GGGGGGGGGGGGSGHGS). A helical transmembrane segment spans residues 140–160 (LIFGMFGIVVMVIETELSWGA). Y161 is subject to Phosphotyrosine. The chain crosses the membrane as a helical span at residues 169-189 (LALKCLISLSTIILLGLIIVY). A helical membrane pass occupies residues 215 to 235 (IFFICLEILVCAIHPIPGNYT). The helical transmembrane segment at 257-277 (IILSIPMFLRLYLIARVMLLH) threads the bilayer. A helical transmembrane segment spans residues 306 to 326 (LMTICPGTVLLVFSISLWIIA). The segment at residues 346–366 (FLGAMWLISITFLSIGYGDMV) is an intramembrane region (pore-forming). The helical transmembrane segment at 375 to 395 (VCLLTGIMGAGCTALVVAVVA) threads the bilayer. The interval 413–489 (DTQLTKRVKN…LVDLAKTQNI (77 aa)) is calmodulin-binding. The segment covering 551-560 (HVTYNAERSR) has biased composition (basic and acidic residues). The segment at 551-580 (HVTYNAERSRSSSRRRRSSSTAPPTSSESS) is disordered. Positions 569–580 (SSTAPPTSSESS) are enriched in low complexity.

This sequence belongs to the potassium channel KCNN family. KCa2.2/KCNN2 subfamily. As to quaternary structure, homodimer. Heteromultimer with KCNN1 and KCNN3. The complex is composed of 4 channel subunits each of which binds to a calmodulin subunit which regulates the channel activity through calcium-binding. Interacts (via N-terminal domain) with MPP2. Brain.

The protein localises to the membrane. It is found in the cytoplasm. It localises to the myofibril. The protein resides in the sarcomere. Its subcellular location is the z line. It catalyses the reaction K(+)(in) = K(+)(out). Its activity is regulated as follows. Inhibited by bee venom neurotoxin apamin. Inhibited by UCL 1684 and tetraethylammonium (TEA). Small conductance calcium-activated potassium channel that mediates the voltage-independent transmembrane transfer of potassium across the cell membrane through a constitutive interaction with calmodulin which binds the intracellular calcium allowing its opening. The current is characterized by a voltage-independent activation, an intracellular calcium concentration increase-dependent activation and a single-channel conductance of about 3 picosiemens. Also presents an inwardly rectifying current, thus reducing its already small outward conductance of potassium ions, which is particularly the case when the membrane potential displays positive values, above + 20 mV. The inward rectification could be due to a blockade of the outward current by intracellular divalent cations such as calcium and magnesium and could also be due to an intrinsic property of the channel pore, independent of intracellular divalent ions. There are three positively charged amino acids in the S6 transmembrane domain, close to the pore, that collectively control the conductance and rectification through an electrostatic mechanism. Additionally, electrostatic contributions from these residues also play an important role in determining the intrinsic open probability of the channel in the absence of calcium, affecting the apparent calcium affinity for activation. Forms an heteromeric complex with calmodulin, which is constitutively associated in a calcium-independent manner. Channel opening is triggered when calcium binds the calmodulin resulting in a rotary movement leading to the formation of the dimeric complex to open the gate. Plays a role in the repolarization phase of cardiac action potential. This Rattus norvegicus (Rat) protein is Small conductance calcium-activated potassium channel protein 2.